The chain runs to 453 residues: Probable glycine dehydrogenase (decarboxylating) subunit 1 (453 aa).

It belongs to the GcvP family. N-terminal subunit subfamily. The glycine cleavage system is composed of four proteins: P, T, L and H. In this organism, the P 'protein' is a heterodimer of two subunits.

The catalysed reaction is N(6)-[(R)-lipoyl]-L-lysyl-[glycine-cleavage complex H protein] + glycine + H(+) = N(6)-[(R)-S(8)-aminomethyldihydrolipoyl]-L-lysyl-[glycine-cleavage complex H protein] + CO2. Its function is as follows. The glycine cleavage system catalyzes the degradation of glycine. The P protein binds the alpha-amino group of glycine through its pyridoxal phosphate cofactor; CO(2) is released and the remaining methylamine moiety is then transferred to the lipoamide cofactor of the H protein. This is Probable glycine dehydrogenase (decarboxylating) subunit 1 from Methylococcus capsulatus (strain ATCC 33009 / NCIMB 11132 / Bath).